Here is a 154-residue protein sequence, read N- to C-terminus: MEILVVAVGILVDRLTKIWALDKLKKVQDIPIIKNFFDLTYVENRGAAWGIFSGKTLVLSAVTLLVLSAIIVYMIKYRPKSKLARISLSLVISGALGNLYDRVFYKYVVDLFSLHYKDIYYYPVFNVADICVVVGTIMIAIFIVLKDDKKDGKV.

Transmembrane regions (helical) follow at residues 57–77 (LVLSAVTLLVLSAIIVYMIKY) and 86–103 (ISLSLVISGALGNLYDRV). Active-site residues include aspartate 110 and aspartate 129. Residues 124–144 (VFNVADICVVVGTIMIAIFIV) form a helical membrane-spanning segment.

Belongs to the peptidase A8 family.

The protein resides in the cell membrane. The catalysed reaction is Release of signal peptides from bacterial membrane prolipoproteins. Hydrolyzes -Xaa-Yaa-Zaa-|-(S,diacylglyceryl)Cys-, in which Xaa is hydrophobic (preferably Leu), and Yaa (Ala or Ser) and Zaa (Gly or Ala) have small, neutral side chains.. It participates in protein modification; lipoprotein biosynthesis (signal peptide cleavage). In terms of biological role, this protein specifically catalyzes the removal of signal peptides from prolipoproteins. The polypeptide is Lipoprotein signal peptidase (Clostridium acetobutylicum (strain ATCC 824 / DSM 792 / JCM 1419 / IAM 19013 / LMG 5710 / NBRC 13948 / NRRL B-527 / VKM B-1787 / 2291 / W)).